The primary structure comprises 509 residues: Tyrosine-protein kinase STK (509 aa).

The span at 1–16 shows a compositional bias: polar residues; the sequence is MGPCCSKQTKALNNQP. Residues 1–23 form a disordered region; the sequence is MGPCCSKQTKALNNQPDKSKSKD. A lipid anchor (N-myristoyl glycine) is attached at G2. The SH3 domain maps to 59-120; it reads PGVTIFVALY…PSTYVAPEKS (62 aa). Residues 126-218 enclose the SH2 domain; it reads WYFGDVKRAE…GLVCALTLPC (93 aa). The Protein kinase domain occupies 240 to 495; it reads LRLNRKLGAG…LQGVLEDYFV (256 aa). ATP-binding positions include 246-254 and K268; that span reads LGAGQFGEV. Catalysis depends on D360, which acts as the Proton acceptor. Y390 carries the phosphotyrosine; by autocatalysis modification.

Belongs to the protein kinase superfamily. Tyr protein kinase family. SRC subfamily.

The enzyme catalyses L-tyrosyl-[protein] + ATP = O-phospho-L-tyrosyl-[protein] + ADP + H(+). This is Tyrosine-protein kinase STK (STK) from Hydra vulgaris (Hydra).